Here is a 202-residue protein sequence, read N- to C-terminus: MWQERLAQLVTTCHWIGAKGWAPATGGNMSVRQDDTWCWLSESGRDKGSLTTEDFLQVEIATNQAPSGRKPSAETGLHTLVYRLFPEANVVLHVHTVNATVLSRIEKSDTLALQGYEMQKTLSGQHSHLDTVPIAIFDNDQDIDALAARIADYAQTRPLRYGFLLRGHGLTCWGKDIQEARRQLEGLEFLFECELMRRRYEP.

Positions 93 and 95 each coordinate Zn(2+).

Belongs to the aldolase class II family. MtnB subfamily. Zn(2+) is required as a cofactor.

It catalyses the reaction 5-(methylsulfanyl)-D-ribulose 1-phosphate = 5-methylsulfanyl-2,3-dioxopentyl phosphate + H2O. The protein operates within amino-acid biosynthesis; L-methionine biosynthesis via salvage pathway; L-methionine from S-methyl-5-thio-alpha-D-ribose 1-phosphate: step 2/6. Catalyzes the dehydration of methylthioribulose-1-phosphate (MTRu-1-P) into 2,3-diketo-5-methylthiopentyl-1-phosphate (DK-MTP-1-P). This chain is Methylthioribulose-1-phosphate dehydratase, found in Klebsiella pneumoniae subsp. pneumoniae (strain ATCC 700721 / MGH 78578).